We begin with the raw amino-acid sequence, 311 residues long: Probable manganese-dependent inorganic pyrophosphatase (311 aa).

Residues His9, Asp13, Asp15, Asp75, His97, and Asp149 each contribute to the Mn(2+) site.

This sequence belongs to the PPase class C family. It depends on Mn(2+) as a cofactor.

It is found in the cytoplasm. The enzyme catalyses diphosphate + H2O = 2 phosphate + H(+). This chain is Probable manganese-dependent inorganic pyrophosphatase, found in Lactobacillus johnsonii (strain CNCM I-12250 / La1 / NCC 533).